Reading from the N-terminus, the 476-residue chain is Serine--tRNA ligase (476 aa).

Thr279–Glu281 serves as a coordination point for L-serine. Position 310-312 (Arg310–Glu312) interacts with ATP. Position 333 (Glu333) interacts with L-serine. Residue Glu400–Ser403 coordinates ATP. Ser435 provides a ligand contact to L-serine.

This sequence belongs to the class-II aminoacyl-tRNA synthetase family. Type-1 seryl-tRNA synthetase subfamily. As to quaternary structure, homodimer. The tRNA molecule binds across the dimer.

It is found in the cytoplasm. The catalysed reaction is tRNA(Ser) + L-serine + ATP = L-seryl-tRNA(Ser) + AMP + diphosphate + H(+). The enzyme catalyses tRNA(Sec) + L-serine + ATP = L-seryl-tRNA(Sec) + AMP + diphosphate + H(+). It functions in the pathway aminoacyl-tRNA biosynthesis; selenocysteinyl-tRNA(Sec) biosynthesis; L-seryl-tRNA(Sec) from L-serine and tRNA(Sec): step 1/1. Functionally, catalyzes the attachment of serine to tRNA(Ser). Is also able to aminoacylate tRNA(Sec) with serine, to form the misacylated tRNA L-seryl-tRNA(Sec), which will be further converted into selenocysteinyl-tRNA(Sec). This Rhodopseudomonas palustris (strain BisA53) protein is Serine--tRNA ligase.